We begin with the raw amino-acid sequence, 487 residues long: GTPase Der (487 aa).

EngA-type G domains follow at residues 3-166 (PVIA…PRDA) and 193-366 (IKIA…KSAV). Residues 9-16 (GRPNVGKS), 56-60 (DTGGI), 118-121 (NKID), 199-206 (GRPNVGKS), 246-250 (DTAGV), and 311-314 (NKWD) contribute to the GTP site. A KH-like domain is found at 367–451 (TRWPTSRLTQ…PIRIEYKGGE (85 aa)). The segment covering 449 to 461 (GGENPFEGKKNTL) has biased composition (basic and acidic residues). The disordered stretch occupies residues 449–487 (GGENPFEGKKNTLTDRQVNKKRRLMSHHKKAEKKRRDKR). Residues 467–487 (NKKRRLMSHHKKAEKKRRDKR) are compositionally biased toward basic residues.

Belongs to the TRAFAC class TrmE-Era-EngA-EngB-Septin-like GTPase superfamily. EngA (Der) GTPase family. Associates with the 50S ribosomal subunit.

Its function is as follows. GTPase that plays an essential role in the late steps of ribosome biogenesis. This chain is GTPase Der, found in Pseudomonas putida (strain GB-1).